The following is a 643-amino-acid chain: Phosphomethylpyrimidine synthase (643 aa).

Residues asparagine 248, methionine 277, tyrosine 306, histidine 342, 362-364 (SRG), 403-406 (DGLR), and glutamate 442 contribute to the substrate site. Histidine 446 serves as a coordination point for Zn(2+). Tyrosine 469 serves as a coordination point for substrate. Residue histidine 510 participates in Zn(2+) binding. [4Fe-4S] cluster is bound by residues cysteine 590, cysteine 593, and cysteine 598.

It belongs to the ThiC family. In terms of assembly, homodimer. [4Fe-4S] cluster is required as a cofactor.

The enzyme catalyses 5-amino-1-(5-phospho-beta-D-ribosyl)imidazole + S-adenosyl-L-methionine = 4-amino-2-methyl-5-(phosphooxymethyl)pyrimidine + CO + 5'-deoxyadenosine + formate + L-methionine + 3 H(+). It participates in cofactor biosynthesis; thiamine diphosphate biosynthesis. Catalyzes the synthesis of the hydroxymethylpyrimidine phosphate (HMP-P) moiety of thiamine from aminoimidazole ribotide (AIR) in a radical S-adenosyl-L-methionine (SAM)-dependent reaction. This chain is Phosphomethylpyrimidine synthase, found in Burkholderia ambifaria (strain MC40-6).